Here is a 286-residue protein sequence, read N- to C-terminus: Nucleotide-binding protein PLES_48441 (286 aa).

8–15 (GRSGSGKS) lines the ATP pocket. Position 60-63 (60-63 (DARN)) interacts with GTP.

This sequence belongs to the RapZ-like family.

In terms of biological role, displays ATPase and GTPase activities. This is Nucleotide-binding protein PLES_48441 from Pseudomonas aeruginosa (strain LESB58).